The sequence spans 719 residues: Glutamate--tRNA ligase, cytoplasmic (719 aa).

An ATP-binding site is contributed by Ser93. The disordered stretch occupies residues 176–205 (SGKPVAAPKSKDSQQAVKGDGQDKGKPEVD). A compositionally biased stretch (basic and acidic residues) spans 195-204 (DGQDKGKPEV). Position 217-219 (217-219 (RFA)) interacts with L-glutamate. The short motif at 220 to 230 (PEPSGYLHIGH) is the 'HIGH' region element. Residue His227 participates in ATP binding. Residues 393–397 (YDFAC) and Arg411 each bind L-glutamate. Residues Glu414 and 448 to 452 (LLSKR) contribute to the ATP site. The 'KMSKS' region signature appears at 448–452 (LLSKR).

Belongs to the class-I aminoacyl-tRNA synthetase family. Glutamate--tRNA ligase type 2 subfamily. Interacts with GLN2, COL4 and RPP13L4/ZAR1.

It is found in the cytoplasm. The protein resides in the cytosol. It catalyses the reaction tRNA(Glu) + L-glutamate + ATP = L-glutamyl-tRNA(Glu) + AMP + diphosphate. Functionally, catalyzes the attachment of glutamate to tRNA(Glu) in a two-step reaction: glutamate is first activated by ATP to form Glu-AMP and then transferred to the acceptor end of tRNA(Glu). The polypeptide is Glutamate--tRNA ligase, cytoplasmic (Arabidopsis thaliana (Mouse-ear cress)).